The sequence spans 89 residues: Small ribosomal subunit protein uS15 (89 aa).

Belongs to the universal ribosomal protein uS15 family. Part of the 30S ribosomal subunit. Forms a bridge to the 50S subunit in the 70S ribosome, contacting the 23S rRNA.

One of the primary rRNA binding proteins, it binds directly to 16S rRNA where it helps nucleate assembly of the platform of the 30S subunit by binding and bridging several RNA helices of the 16S rRNA. In terms of biological role, forms an intersubunit bridge (bridge B4) with the 23S rRNA of the 50S subunit in the ribosome. This chain is Small ribosomal subunit protein uS15, found in Aliivibrio salmonicida (strain LFI1238) (Vibrio salmonicida (strain LFI1238)).